Reading from the N-terminus, the 182-residue chain is Ribulose bisphosphate carboxylase small subunit, chloroplastic (182 aa).

A chloroplast-targeting transit peptide spans 1 to 58 (MACSMISSATVAAVSRASPAQSSMVAPFTCLKSTSAFPVTQKTNNDITSIASNGGRVQ).

Belongs to the RuBisCO small chain family. Heterohexadecamer of 8 large and 8 small subunits.

The protein localises to the plastid. It localises to the chloroplast. In terms of biological role, ruBisCO catalyzes two reactions: the carboxylation of D-ribulose 1,5-bisphosphate, the primary event in carbon dioxide fixation, as well as the oxidative fragmentation of the pentose substrate. Both reactions occur simultaneously and in competition at the same active site. Although the small subunit is not catalytic it is essential for maximal activity. This chain is Ribulose bisphosphate carboxylase small subunit, chloroplastic, found in Betula pendula (European white birch).